The following is a 147-amino-acid chain: Testis-expressed protein 29 (147 aa).

Topologically, residues M1–S57 are extracellular. Residues Y58–I78 form a helical membrane-spanning segment. Residues Y79–D147 are Cytoplasmic-facing. Residues R86–D147 are disordered. Over residues A99–Q108 the composition is skewed to polar residues. The span at P109–P120 shows a compositional bias: low complexity. Residues P125–A135 show a composition bias toward basic and acidic residues.

It localises to the membrane. This chain is Testis-expressed protein 29 (TEX29), found in Bos taurus (Bovine).